We begin with the raw amino-acid sequence, 110 residues long: Putative membrane protein insertion efficiency factor (110 aa).

Belongs to the UPF0161 family.

The protein localises to the cell inner membrane. Functionally, could be involved in insertion of integral membrane proteins into the membrane. The polypeptide is Putative membrane protein insertion efficiency factor (Aliarcobacter butzleri (strain RM4018) (Arcobacter butzleri)).